The primary structure comprises 1241 residues: ATP-dependent helicase/nuclease subunit A (1241 aa).

One can recognise a UvrD-like helicase ATP-binding domain in the interval 12-485; the sequence is SQWTDDQWKA…IDLAKNFRSR (474 aa). 33 to 40 contacts ATP; sequence AAAGSGKT. The UvrD-like helicase C-terminal domain maps to 505 to 805; sequence GEIDYDADAE…RIMTIHKSKG (301 aa).

Belongs to the helicase family. AddA subfamily. In terms of assembly, heterodimer of AddA and AddB/RexB. Mg(2+) is required as a cofactor.

The enzyme catalyses Couples ATP hydrolysis with the unwinding of duplex DNA by translocating in the 3'-5' direction.. It catalyses the reaction ATP + H2O = ADP + phosphate + H(+). The heterodimer acts as both an ATP-dependent DNA helicase and an ATP-dependent, dual-direction single-stranded exonuclease. Recognizes the chi site generating a DNA molecule suitable for the initiation of homologous recombination. The AddA nuclease domain is required for chi fragment generation; this subunit has the helicase and 3' -&gt; 5' nuclease activities. The chain is ATP-dependent helicase/nuclease subunit A from Bacillus thuringiensis (strain Al Hakam).